The chain runs to 171 residues: Probable deoxyuridine 5'-triphosphate nucleotidohydrolase (171 aa).

This sequence belongs to the dCTP deaminase family. Archaeal dUTPase subfamily.

The catalysed reaction is dUTP + H2O = dUMP + diphosphate + H(+). It functions in the pathway pyrimidine metabolism; dUMP biosynthesis; dUMP from dCTP (dUTP route): step 2/2. This enzyme is involved in nucleotide metabolism: it produces dUMP, the immediate precursor of thymidine nucleotides and it decreases the intracellular concentration of dUTP so that uracil cannot be incorporated into DNA. The chain is Probable deoxyuridine 5'-triphosphate nucleotidohydrolase from Methanosarcina barkeri (strain Fusaro / DSM 804).